Here is a 275-residue protein sequence, read N- to C-terminus: Nuclear egress protein 2 (275 aa).

Topologically, residues 1–251 (MDSYNYRDFA…SERVKRRPVR (251 aa)) are perinuclear space. Residues 197–221 (CDRSNGIVSPREHRECRERQKRRPT) form a disordered region. Residues 252–272 (IAAAILAFVFVAVILAIATKG) form a helical membrane-spanning segment. The Nuclear portion of the chain corresponds to 273–275 (RLF).

It belongs to the herpesviridae NEC2 protein family. As to quaternary structure, forms a heterohexameric complex with NEC1. Post-translationally, phosphorylated.

Its subcellular location is the host nucleus inner membrane. In terms of biological role, plays an essential role in virion nuclear egress, the first step of virion release from infected cell. Within the host nucleus, NEC1 interacts with the newly formed capsid through the vertexes and directs it to the inner nuclear membrane by associating with NEC2. Induces the budding of the capsid at the inner nuclear membrane as well as its envelopment into the perinuclear space. There, the NEC1/NEC2 complex promotes the fusion of the enveloped capsid with the outer nuclear membrane and the subsequent release of the viral capsid into the cytoplasm where it will reach the secondary budding sites in the host Golgi or trans-Golgi network. This Equus caballus (Horse) protein is Nuclear egress protein 2.